The primary structure comprises 150 residues: Small ribosomal subunit protein bS6 (150 aa).

The interval 99–150 (GPSAMLQKRDRDDRGERGERGFGGGGFGGGRDREDRPRRGRDREEAATEETF) is disordered. 2 stretches are compositionally biased toward basic and acidic residues: residues 105–118 (QKRDRDDRGERGER) and 128–144 (GRDREDRPRRGRDREEA).

This sequence belongs to the bacterial ribosomal protein bS6 family.

Functionally, binds together with bS18 to 16S ribosomal RNA. In Azorhizobium caulinodans (strain ATCC 43989 / DSM 5975 / JCM 20966 / LMG 6465 / NBRC 14845 / NCIMB 13405 / ORS 571), this protein is Small ribosomal subunit protein bS6.